A 332-amino-acid polypeptide reads, in one-letter code: Endonuclease 8-like 2 (332 aa).

Proline 2 functions as the Schiff-base intermediate with DNA in the catalytic mechanism. Catalysis depends on glutamate 3, which acts as the Proton donor. Residue lysine 50 is the Proton donor; for beta-elimination activity of the active site. The residue at position 50 (lysine 50) is an N6-acetyllysine. A disordered region spans residues phenylalanine 56–aspartate 121. Serine 68 bears the Phosphoserine mark. Residues proline 74 to alanine 84 show a composition bias toward basic and acidic residues. Polar residues predominate over residues glycine 94–alanine 105. Lysine 154 carries the post-translational modification N6-acetyllysine. Asparagine 231 provides a ligand contact to DNA. The FPG-type zinc finger occupies glutamine 284–proline 320. Catalysis depends on arginine 310, which acts as the Proton donor; for delta-elimination activity.

It belongs to the FPG family. Binds EP300.

It is found in the nucleus. The catalysed reaction is 2'-deoxyribonucleotide-(2'-deoxyribose 5'-phosphate)-2'-deoxyribonucleotide-DNA = a 3'-end 2'-deoxyribonucleotide-(2,3-dehydro-2,3-deoxyribose 5'-phosphate)-DNA + a 5'-end 5'-phospho-2'-deoxyribonucleoside-DNA + H(+). With respect to regulation, acetylation of Lys-50 leads to loss of DNA nicking activity. Involved in base excision repair of DNA damaged by oxidation or by mutagenic agents. Has DNA glycosylase activity towards 5-hydroxyuracil and other oxidized derivatives of cytosine with a preference for mismatched double-stranded DNA (DNA bubbles). Has low or no DNA glycosylase activity towards thymine glycol, 2-hydroxyadenine, hypoxanthine and 8-oxoguanine. Has AP (apurinic/apyrimidinic) lyase activity and introduces nicks in the DNA strand. Cleaves the DNA backbone by beta-delta elimination to generate a single-strand break at the site of the removed base with both 3'- and 5'-phosphates. The chain is Endonuclease 8-like 2 (NEIL2) from Pongo abelii (Sumatran orangutan).